A 151-amino-acid chain; its full sequence is Ribosome maturation factor RimP (151 aa).

It belongs to the RimP family.

It localises to the cytoplasm. Its function is as follows. Required for maturation of 30S ribosomal subunits. In Colwellia psychrerythraea (strain 34H / ATCC BAA-681) (Vibrio psychroerythus), this protein is Ribosome maturation factor RimP.